We begin with the raw amino-acid sequence, 915 residues long: MVVCGGPTVLRDLLGADTEPTWKDEEVCVVGLFGKTALAQGSWHKCSLINSLCDRHIFPLFHRAPERPSERSLFQTYYEQESRVLYVLLAGLSDTGSLLKACEELSRGVSHAEAHEWWKDEEKLYCMHLLYLFSVCHILVLVHPTCCFDITYEKLFRALDSLRQKMLPSLKPSLKDCAVGLDWKLNARPCPPRLLFIFQLNGALKVEPKSQGPQTNEKPKKHSPKRRLQHALEDQIYRIFRKSRVLTNQSINCLFTVPANQAFVYIVADEDEDPVNMLLEGLRHNCTLKDTESLVPISGPRRYQMMRHTRQLSFTVENNTSLSGQLVDCTLREFLFQHVELVLTKKGFDDSVGRNPQPSHFELPTYQKWVSVALKLYEIIIENKDDDPPAFPGGFPPKLLANMKVLEGYLDADTKFSENRCQKALPMAHSAYQSNLPHNYTTTVHKNQLAQALRVYSQHARGPAFHKYAMVLNEDCYKFWSSGHQLCEERSLTDQHCVHKFHLLPKSGEKIEPERNPPILFHNSRARSTGSCNCGKKQAPREDPFDIKSANYDFYQILEEKCCGKLDHITFPIFQPSTPDPAPAKNEASPAAHDGEVEGEKMKDKEPQTQGESTSLSLALSLGQSTDSLGTFPEGPKAGGDNTEASGHGTDEKVEKRPSLVDRQASTVEYLPGMVHLNSPKGLLPKFSSWALVKLGPAKSYNFHTGLDHLGFIPGTSYLMPWDIVIRTKPEDESDLDTNSWPAPNKSIPGKRNSVVMGRGRRRDDIARAFVGFEYEDSRGRRFMCSGPDKIMKAIGNGPKESAIKALNTDMPLYMLSPSQGRGLKPHYAQLMRLFVVVPDAPVQIILAPQVQPGPPPCPVFVPEKQEITLPSDGLWVLRFPFSYASERGPCYSPKENQQLPSYKVMKGILRTVTQ.

Disordered regions lie at residues 207-228, 520-541, 574-661, and 733-755; these read EPKS…KRRL, LFHN…QAPR, FQPS…PSLV, and ESDL…RNSV. Residues 219–228 show a composition bias toward basic residues; sequence PKKHSPKRRL. Residues 593-607 are compositionally biased toward basic and acidic residues; the sequence is HDGEVEGEKMKDKEP. The segment covering 608-629 has biased composition (polar residues); the sequence is QTQGESTSLSLALSLGQSTDSL. Positions 649 to 660 are enriched in basic and acidic residues; it reads GTDEKVEKRPSL.

The protein belongs to the SMG8 family. Component of the SMG1C complex composed of smg1, smg8 and smg9.

Involved in nonsense-mediated decay (NMD) of mRNAs containing premature stop codons. Is recruited by release factors to stalled ribosomes together with smg1 and smg9 (forming the SMG1C protein kinase complex) and, in the SMG1C complex, is required to mediate the recruitment of smg1 to the ribosome:SURF complex and to suppress smg1 kinase activity until the ribosome:SURF complex locates the exon junction complex (EJC). Acts as a regulator of kinase activity. The sequence is that of Nonsense-mediated mRNA decay factor SMG8 (smg8) from Xenopus tropicalis (Western clawed frog).